A 64-amino-acid chain; its full sequence is Translation machinery-associated protein 7 (64 aa).

Residues 1–64 form a disordered region; sequence MSGREGGKKK…GSGIKKSGKK (64 aa). The stretch at 21–50 forms a coiled coil; it reads DMDDDDVAFKQKQKEDQKAMEALKARASGK. The span at 27–44 shows a compositional bias: basic and acidic residues; it reads VAFKQKQKEDQKAMEALK.

The protein belongs to the TMA7 family.

The protein is Translation machinery-associated protein 7 (tma7) of Tetraodon nigroviridis (Spotted green pufferfish).